Consider the following 171-residue polypeptide: 2-vinyl bacteriochlorophyllide hydratase (171 aa).

It functions in the pathway porphyrin-containing compound metabolism; bacteriochlorophyll biosynthesis (light-independent). This Rhodobacter capsulatus (strain ATCC BAA-309 / NBRC 16581 / SB1003) protein is 2-vinyl bacteriochlorophyllide hydratase (bchF).